Here is a 583-residue protein sequence, read N- to C-terminus: MLO-like protein 6 (583 aa).

Over 1-15 the chain is Extracellular; the sequence is MADQVKEKTLEETST. Residues 16-36 traverse the membrane as a helical segment; the sequence is WAVAVVCFVLLLISIVIEKLI. Residues 37–61 lie on the Cytoplasmic side of the membrane; it reads HKIGSWFKKKNKKALYEALEKVKAE. A helical transmembrane segment spans residues 62 to 82; the sequence is LMLMGFISLLLTIGQGYISNI. At 83–161 the chain is on the extracellular side; the sequence is CIPKNIAASM…VSAYGMHQLH (79 aa). A helical membrane pass occupies residues 162-182; it reads IFIFVLAVCHVIYCIVTYALG. The Cytoplasmic segment spans residues 183 to 284; it reads KTKMRRWKKW…KYIQRSLEED (102 aa). The helical transmembrane segment at 285 to 305 threads the bilayer; that stretch reads FKTIVEINPVIWFIAVLFLLT. Residues 306–314 lie on the Extracellular side of the membrane; the sequence is NTNGLNSYL. A helical membrane pass occupies residues 315-335; that stretch reads WLPFIPFIVILIVGTKLQVII. Over 336–368 the chain is Cytoplasmic; it reads TKLGLRIQEKGDVVKGTPLVQPGDHFFWFGRPR. A helical transmembrane segment spans residues 369-389; sequence FILFLIHLVLFTNAFQLAFFV. The Extracellular portion of the chain corresponds to 390 to 411; the sequence is WSTYEFGLKNCFHESRVDVIIR. A helical membrane pass occupies residues 412-432; sequence ISIGLLVQILCSYVTLPLYAL. Residues 433 to 583 lie on the Cytoplasmic side of the membrane; the sequence is VTQMGSKMKP…ISLRDFSFKR (151 aa). The calmodulin-binding stretch occupies residues 447–468; it reads ERVATALKSWHHTAKKNIKHGR. The tract at residues 461 to 583 is disordered; that stretch reads KKNIKHGRTS…ISLRDFSFKR (123 aa). A compositionally biased stretch (low complexity) spans 470–484; the sequence is SESTTPFSSRPTTPT. Residues 541 to 551 show a composition bias toward basic and acidic residues; the sequence is RFGEEESEKKF.

This sequence belongs to the MLO family.

The protein resides in the membrane. In terms of biological role, may be involved in modulation of pathogen defense and leaf cell death. Activity seems to be regulated by Ca(2+)-dependent calmodulin binding and seems not to require heterotrimeric G proteins. The polypeptide is MLO-like protein 6 (MLO6) (Arabidopsis thaliana (Mouse-ear cress)).